We begin with the raw amino-acid sequence, 340 residues long: MEITDMPTDDSNNGIIDYVSTGHLPDPETVVKLVQEAHKRFSTDTAGVVSNVYPALERIPADLFGICMVGTNGKIHSAGDVDYEFTIMSVSKPFVFALVCQAIGAKTAREKLGVNSTGMAFNSVTAIERASDGRTNPMVNSGAIATTSLVPGATSDEQWKFIYDGLCRFAGRELTLNEEVYQSACETNFRNRGIANVLQGYGRLGCDPIIATDLYTRQCSLNVSARDLAVMGATLADGGVNPLTRERVVDNDICHYALAVMVTAGLYETSGDWLYDIGLPGKSGIGGGIVTVSPGKGGLGTFAPLLDSAGNSIKGQLAARFLSRSLGMDMFVSEPYTEKN.

Residues Ser89, Asn140, Asn191, Tyr215, and Tyr267 each contribute to the substrate site.

This sequence belongs to the glutaminase family. In terms of assembly, homotetramer.

It carries out the reaction L-glutamine + H2O = L-glutamate + NH4(+). In Yersinia pestis, this protein is Glutaminase 2.